Consider the following 331-residue polypeptide: N-arachidonyl glycine receptor (331 aa).

The Extracellular segment spans residues 1–26 (MAIPSNRDQLALSNGSHPEEYKIAAL). Asn14 is a glycosylation site (N-linked (GlcNAc...) asparagine). A helical transmembrane segment spans residues 27–47 (VFYSCIFLIGLLVNVTALWVF). Residues 48-56 (SCTTKKRTT) lie on the Cytoplasmic side of the membrane. Residues 57–77 (VTIYMMNVALLDLVFILSLPF) form a helical membrane-spanning segment. The Extracellular segment spans residues 78-95 (RMFYYAKGEWPFGDYFCH). Cys94 and Cys172 form a disulfide bridge. Residues 96 to 116 (ILGALVVFYPSLALWLLALIS) form a helical membrane-spanning segment. The Cytoplasmic segment spans residues 117–138 (ADRYMAIVQPKYAKELKNTGKA). A helical transmembrane segment spans residues 139–159 (VLACVGVWIMTLTTTVPLLLL). Over 160-191 (DEDPDKASSPATCLKISDIIHLKAVNVLNFTR) the chain is Extracellular. Asn188 carries an N-linked (GlcNAc...) asparagine glycan. Residues 192–212 (LIFFFLIPLFIMIGCYVVIIH) form a helical membrane-spanning segment. Topologically, residues 213–236 (SLLRGQTSKLKPKVKEKSIRIIVT) are cytoplasmic. Residues 237–257 (LLLQVLACFVPFHICFALLML) traverse the membrane as a helical segment. Topologically, residues 258-268 (QGEENSYSPWG) are extracellular. A helical transmembrane segment spans residues 269 to 289 (AFTTFLMNLSTCLDVVLYYIV). Topologically, residues 290-331 (SKQFQARVISVMLYRNYLRSVRRKSVRSGSLRSLSNMNSEML) are cytoplasmic. Ser322 is modified (phosphoserine).

Belongs to the G-protein coupled receptor 1 family. Expressed in testis, spleen and brain (at protein level).

The protein resides in the cell membrane. It localises to the cytoplasmic vesicle membrane. Its function is as follows. G protein-coupled receptor (GPCR) that plays a role in diverse physiological processes particularly within the immune and nervous systems. Becomes active when triggered by various endogenous ligands including endocannabinoid N-arachidonyl glycine (NAGly), delta-9-tetrahydrocannabinol or resolvin D2/RvD2 derived from the omega-3 fatty acid docosahexaenoic acid (DHA). Upon RvD2 binding, facilitates the resolution of inflammation, aiding in tissue repair and homeostasis. Mechanistically, RvD2 ligation initiates Galphas protein coupling, activation of cAMP-PKA signaling pathway and phosphorylation of STAT3, leading to RvD2-stimulated macrophage phagocytosis. Mediates NAGly-induced process of reorganization of actin filaments and induction of acrosomal exocytosis. Activation by N-arachidonoyl glycine (NAGly) can also induce apoptosis in macrophages. Plays a role in homeostasis of CD8+ subsets of intraepithelial lymphocytes (IELs) (CD8alphaalpha and CD8alphabeta IELs) in small intestine by supporting preferential migration of CD8alphaalpha T-cells to intraepithelial compartment over lamina propria compartment, and by mediating their reconstitution into small intestine after bone marrow transplant. Participates also in hypotensive responses, mediating reduction in intraocular and blood pressure. The protein is N-arachidonyl glycine receptor of Rattus norvegicus (Rat).